The chain runs to 423 residues: Histidine--tRNA ligase (423 aa).

The protein belongs to the class-II aminoacyl-tRNA synthetase family. As to quaternary structure, homodimer.

It localises to the cytoplasm. It catalyses the reaction tRNA(His) + L-histidine + ATP = L-histidyl-tRNA(His) + AMP + diphosphate + H(+). This is Histidine--tRNA ligase (hisS) from Pasteurella multocida (strain Pm70).